A 1074-amino-acid chain; its full sequence is Telomerase reverse transcriptase (1074 aa).

The interval 240–265 (DKVSCETMQDGESGKTTLVQKQPGSK) is disordered. Over residues 253-262 (GKTTLVQKQP) the composition is skewed to polar residues. The TFLY; involved in RNA binding signature appears at 300–305 (TLGFLY). 2 interaction with RNA template regions span residues 355 to 360 (LPRRFF) and 461 to 486 (WKIKVNNCDWLKISKTGRVPPSELSY). In terms of domain architecture, Reverse transcriptase spans 552 to 877 (TPDQVAALPK…CLFPWCGLLL (326 aa)). Residues D649, D810, and D811 each coordinate Mg(2+).

The protein belongs to the reverse transcriptase family. Telomerase subfamily. Catalytic subunit of the telomerase holoenzyme complex composed minimally of TERT and the telomerase RNA template component (TERC). Detected at highest levels in gill, ovary and testis, and at lower levels in brain, eye, heart, skin, spleen and stomach.

The protein resides in the nucleus. It is found in the chromosome. It localises to the telomere. It catalyses the reaction DNA(n) + a 2'-deoxyribonucleoside 5'-triphosphate = DNA(n+1) + diphosphate. Functionally, telomerase is a ribonucleoprotein enzyme essential for the replication of chromosome termini in most eukaryotes. It elongates telomeres. It is a reverse transcriptase that adds simple sequence repeats to chromosome ends by copying a template sequence within the RNA component of the enzyme. This is Telomerase reverse transcriptase from Takifugu rubripes (Japanese pufferfish).